The chain runs to 233 residues: Ion-translocating oxidoreductase complex subunit E (233 aa).

The next 5 helical transmembrane spans lie at 22-42 (LLGLCPLLAVTSTATNALGLG), 69-89 (IPIYVMIIAAVVSCVQMLINA), 93-113 (GLYQSLGIFIPLIVTNCIVVG), 128-148 (ALDGMAIGLGATSVMVVLGSI), and 182-202 (PMLLAMLPPGAFIGLGMLLAA).

It belongs to the NqrDE/RnfAE family. As to quaternary structure, the complex is composed of six subunits: RnfA, RnfB, RnfC, RnfD, RnfE and RnfG.

The protein resides in the cell inner membrane. Part of a membrane-bound complex that couples electron transfer with translocation of ions across the membrane. The chain is Ion-translocating oxidoreductase complex subunit E from Erwinia tasmaniensis (strain DSM 17950 / CFBP 7177 / CIP 109463 / NCPPB 4357 / Et1/99).